Here is a 134-residue protein sequence, read N- to C-terminus: Fatty acid-binding protein 5 (134 aa).

The Nuclear localization signal signature appears at 23–33; sequence KELGVGMAMRK. Hexadecanoate contacts are provided by residues R109 and 129–131; that span reads RVY. N-eicosanoyl ethanolamine is bound by residues R109 and Y131. 129-131 contacts (9Z,12Z)-octadecadienoate; that stretch reads RVY.

The protein belongs to the calycin superfamily. Fatty-acid binding protein (FABP) family. As to quaternary structure, monomer.

Its subcellular location is the cytoplasm. It localises to the nucleus. It is found in the synapse. The protein resides in the postsynaptic density. The protein localises to the secreted. It carries out the reaction hexadecanoate(out) = hexadecanoate(in). The catalysed reaction is (9Z,12Z)-octadecadienoate(out) = (9Z,12Z)-octadecadienoate(in). The enzyme catalyses (9Z)-octadecenoate(out) = (9Z)-octadecenoate(in). Intracellular carrier for long-chain fatty acids and related active lipids, such as endocannabinoids, that regulate the metabolism and actions of the ligands they bind. In addition to the cytosolic transport, selectively delivers specific fatty acids from the cytosol to the nucleus, wherein they activate nuclear receptors. Delivers retinoic acid to the nuclear receptor peroxisome proliferator-activated receptor delta; which promotes proliferation and survival. May also serve as a synaptic carrier of endocannabinoid at central synapses and thus controls retrograde endocannabinoid signaling. Modulates inflammation by regulating PTGES induction via NF-kappa-B activation, and prostaglandin E2 (PGE2) biosynthesis during inflammation. Has the highest binding affinity for docosahexaenoic acid (DHA) and decreasing relative affinity for eicosapentaenoic acid (EPA), alpha-linolenic acid (ALA), oleic acid, palmitic acid, linoleic acid and stearic acid, respectively. This is Fatty acid-binding protein 5 from Pygoscelis papua (Gentoo penguin).